The sequence spans 66 residues: Large ribosomal subunit protein bL35 (66 aa).

Belongs to the bacterial ribosomal protein bL35 family.

This chain is Large ribosomal subunit protein bL35, found in Methylobacterium nodulans (strain LMG 21967 / CNCM I-2342 / ORS 2060).